Reading from the N-terminus, the 345-residue chain is Alpha-N-acetylneuraminide alpha-2,8-sialyltransferase (345 aa).

Topologically, residues Met-1–Arg-15 are cytoplasmic. A helical; Signal-anchor for type II membrane protein membrane pass occupies residues Leu-16 to Gly-36. The Lumenal segment spans residues Tyr-37 to His-345. N-linked (GlcNAc...) asparagine glycans are attached at residues Asn-59 and Asn-107. Cystine bridges form between Cys-126–Cys-275 and Cys-140–Cys-335. Asn-131 and Asn-154 together coordinate CMP-N-acetyl-beta-neuraminate. Substrate is bound by residues Asn-154 and Asn-176–Ser-178. Asn-233 carries an N-linked (GlcNAc...) asparagine glycan. Residues Ser-262, Thr-263, Gly-264, Trp-284, and His-298 each coordinate CMP-N-acetyl-beta-neuraminate. Position 262 to 264 (Ser-262 to Gly-264) interacts with substrate. The Proton donor/acceptor role is filled by His-310.

Belongs to the glycosyltransferase 29 family.

The protein resides in the golgi apparatus membrane. The enzyme catalyses an N-acetyl-alpha-neuraminyl-(2-&gt;3)-beta-D-galactosyl derivative + CMP-N-acetyl-beta-neuraminate = an N-acetyl-alpha-neuraminyl-(2-&gt;8)-N-acetyl-alpha-neuraminyl-(2-&gt;3)-beta-D-galactosyl derivative + CMP + H(+). It catalyses the reaction a ganglioside GM3 (d18:1(4E)) + CMP-N-acetyl-beta-neuraminate = a ganglioside GD3 (d18:1(4E)) + CMP + H(+). It carries out the reaction a ganglioside GD3 (d18:1(4E)) + CMP-N-acetyl-beta-neuraminate = a ganglioside GT3 (d18:1(4E)) + CMP + H(+). The catalysed reaction is a ganglioside GD1a (d18:1(4E)) + CMP-N-acetyl-beta-neuraminate = a ganglioside GT1a (d18:1(4E)) + CMP + H(+). The enzyme catalyses a ganglioside GT1b (d18:1(4E)) + CMP-N-acetyl-beta-neuraminate = a ganglioside GQ1b (d18:1(4E)) + CMP + H(+). It catalyses the reaction a ganglioside GM1b (d18:1(4E)) + CMP-N-acetyl-beta-neuraminate = a ganglioside GD1c (d18:1(4E)) + CMP + H(+). It carries out the reaction a ganglioside GD3 + CMP-N-acetyl-beta-neuraminate = a ganglioside GT3 + CMP + H(+). The catalysed reaction is [alpha-N-acetylneuraminyl-(2-&gt;8)](n)-alpha-N-acetylneuraminyl-(2-&gt;8)-alpha-N-acetylneuraminyl-(2-&gt;3)-beta-D-galactosyl-(1-&gt;4)-beta-D-glucosyl-(1&lt;-&gt;1)-ceramide + CMP-N-acetyl-beta-neuraminate = [alpha-N-acetylneuraminyl-(2-&gt;8)](n+1)-alpha-N-acetylneuraminyl-(2-&gt;8)-alpha-N-acetylneuraminyl-(2-&gt;3)-beta-D-galactosyl-(1-&gt;4)-beta-D-glucosyl-(1&lt;-&gt;1)-ceramide + CMP + H(+). It participates in protein modification; protein glycosylation. Its pathway is lipid metabolism; sphingolipid metabolism. Functionally, catalyzes the addition of sialic acid in alpha 2,8-linkage to the sialic acid moiety of the ganglioside GM3 to form ganglioside GD3; gangliosides are a subfamily of complex glycosphingolipds that contain one or more residues of sialic acid. Glycosphingolipids are required for convergence extension movements during early development. Can catalyze the addition of a second alpha-2,8- sialic acid to GD3 to form GT3. Can use GM1b, GD1a and GT1b as acceptor substrates to synthesize GD1c, GT1a and GQ1b respectively. This chain is Alpha-N-acetylneuraminide alpha-2,8-sialyltransferase, found in Xenopus tropicalis (Western clawed frog).